The primary structure comprises 228 residues: MKKKAVILLSGGPDSTTVLEIVSKTDYEIYALSFNYHRRNSLEVQKIQGLIKDYNVKQHRVINIDLQSFIGSALTDDNIDVPKFQNTDQLPSDIPVTYVPARNTIFLSYALGVAEVIGARDIFIGVHTNDYTNYPDCRPEYIKSFEAMANLATRVGVNGEKITIHAPLINMTKEQIIKKGLELGVDYSKTISCYDPTEDGLSCGQCLSCIARLDAFKKNNVQDPIKYV.

Position 9 to 19 (9 to 19 (LSGGPDSTTVL)) interacts with ATP. Residues C193, C203, C206, and C209 each coordinate Zn(2+).

The protein belongs to the QueC family. Zn(2+) is required as a cofactor.

The catalysed reaction is 7-carboxy-7-deazaguanine + NH4(+) + ATP = 7-cyano-7-deazaguanine + ADP + phosphate + H2O + H(+). It participates in purine metabolism; 7-cyano-7-deazaguanine biosynthesis. In terms of biological role, catalyzes the ATP-dependent conversion of 7-carboxy-7-deazaguanine (CDG) to 7-cyano-7-deazaguanine (preQ(0)). The chain is 7-cyano-7-deazaguanine synthase from Rickettsia conorii (strain ATCC VR-613 / Malish 7).